The sequence spans 206 residues: Ribosomal RNA small subunit methyltransferase G (206 aa).

S-adenosyl-L-methionine contacts are provided by residues Gly74, Leu79, 125 to 126 (VE), and Arg140.

Belongs to the methyltransferase superfamily. RNA methyltransferase RsmG family.

Its subcellular location is the cytoplasm. The catalysed reaction is guanosine(527) in 16S rRNA + S-adenosyl-L-methionine = N(7)-methylguanosine(527) in 16S rRNA + S-adenosyl-L-homocysteine. In terms of biological role, specifically methylates the N7 position of guanine in position 527 of 16S rRNA. The protein is Ribosomal RNA small subunit methyltransferase G of Shewanella sp. (strain MR-4).